Reading from the N-terminus, the 108-residue chain is Nucleoid-associated protein GK0018 (108 aa).

Residues 1–32 (MMRGGMGNMQKMLKQMQKMQKEMQKAQEELAE) form a disordered region. Low complexity predominate over residues 9–18 (MQKMLKQMQK). Positions 19 to 32 (MQKEMQKAQEELAE) are enriched in basic and acidic residues.

Belongs to the YbaB/EbfC family. Homodimer.

The protein resides in the cytoplasm. It is found in the nucleoid. In terms of biological role, binds to DNA and alters its conformation. May be involved in regulation of gene expression, nucleoid organization and DNA protection. The polypeptide is Nucleoid-associated protein GK0018 (Geobacillus kaustophilus (strain HTA426)).